Consider the following 773-residue polypeptide: Phenylalanine--tRNA ligase beta subunit (773 aa).

Positions 39–150 constitute a tRNA-binding domain; the sequence is LKAPDKVVVG…GKLELGRPLN (112 aa). The region spanning 391–467 is the B5 domain; the sequence is KELPIIPISI…RIIGIDNIAS (77 aa). Mg(2+) contacts are provided by Asp-445, Asp-451, Glu-454, and Glu-455. The 92-residue stretch at 682–773 folds into the FDX-ACB domain; sequence SKFPAITRDL…TLKNLGLDLR (92 aa).

The protein belongs to the phenylalanyl-tRNA synthetase beta subunit family. Type 1 subfamily. As to quaternary structure, tetramer of two alpha and two beta subunits. The cofactor is Mg(2+).

Its subcellular location is the cytoplasm. It catalyses the reaction tRNA(Phe) + L-phenylalanine + ATP = L-phenylalanyl-tRNA(Phe) + AMP + diphosphate + H(+). The chain is Phenylalanine--tRNA ligase beta subunit (pheT) from Campylobacter jejuni subsp. jejuni serotype O:2 (strain ATCC 700819 / NCTC 11168).